Here is a 177-residue protein sequence, read N- to C-terminus: Ribosome maturation factor RimM (177 aa).

The PRC barrel domain occupies 100 to 177 (EDEYYWSDLV…TVLVAWPSDY (78 aa)).

The protein belongs to the RimM family. As to quaternary structure, binds ribosomal protein uS19.

It localises to the cytoplasm. In terms of biological role, an accessory protein needed during the final step in the assembly of 30S ribosomal subunit, possibly for assembly of the head region. Essential for efficient processing of 16S rRNA. May be needed both before and after RbfA during the maturation of 16S rRNA. It has affinity for free ribosomal 30S subunits but not for 70S ribosomes. The protein is Ribosome maturation factor RimM of Psychrobacter arcticus (strain DSM 17307 / VKM B-2377 / 273-4).